The following is a 546-amino-acid chain: High-affinity glucose transporter ght5 (546 aa).

Residues 1–9 (MGKNLTIVM) are Cytoplasmic-facing. A helical transmembrane segment spans residues 10–30 (LVFVSMAGWMFGADTGSIGGI). The Extracellular segment spans residues 31–58 (TNMRDFQSRFADRYNPVTDSYSYSSARQ). Residues 59–79 (GLITGMVNVGSFFGCFLSSPL) traverse the membrane as a helical segment. The Cytoplasmic segment spans residues 80 to 87 (MDRIGKRT). The helical transmembrane segment at 88-108 (SIMFWTIVYLIGIILQVTAVP) threads the bilayer. The Extracellular segment spans residues 109–112 (SWVQ). A helical transmembrane segment spans residues 113–133 (IMVAKIWTGLSIGALSVLAPG). Over 134-144 (FQSEVAPADLR) the chain is Cytoplasmic. A helical transmembrane segment spans residues 145–165 (GTIVTTYQLAVTGGIFIAACI). At 166–179 (NMGTHKLHKTAQWR) the chain is on the extracellular side. Residues 180-200 (VSMGINLLWGIITFIGISFLP) traverse the membrane as a helical segment. Over 201–266 (ESPRYLISVG…IFGPDIRYRT (66 aa)) the chain is Cytoplasmic. A helical transmembrane segment spans residues 267 to 285 (FLGLGVMSLQQLTGDNYYF). The Extracellular segment spans residues 286 to 301 (YYGFEVFEGTGMNSPY). The chain crosses the membrane as a helical span at residues 302–322 (LSALILDAVNFGCTFGGLFVL). Residues 323–328 (EFFGRR) are Cytoplasmic-facing. The chain crosses the membrane as a helical span at residues 329–349 (MPLIIGALWQSITFFIYAAVG). The Extracellular portion of the chain corresponds to 350-363 (NRALTRKNGTSNHR). Asn357 is a glycosylation site (N-linked (GlcNAc...) asparagine). Residues 364–384 (AGAVMIVFSCLFIFSFAQTWG) traverse the membrane as a helical segment. Topologically, residues 385-404 (PAAYVIVGESYPIRYRSKCA) are cytoplasmic. The helical transmembrane segment at 405–425 (AVATTGNWLWGFLISFFTPFI) threads the bilayer. The Extracellular portion of the chain corresponds to 426-432 (TNSIGFK). Residues 433–453 (YGYIFAACNLCAACIIFLFAH) form a helical membrane-spanning segment. Over 454–546 (ETKGLTLEEI…SYHDQEEQFA (93 aa)) the chain is Cytoplasmic. A disordered region spans residues 486 to 546 (KQQEEVREKS…SYHDQEEQFA (61 aa)). Residues 487–496 (QQEEVREKSR) show a composition bias toward basic and acidic residues. A compositionally biased stretch (acidic residues) spans 509–519 (VDGEEGIEDSS). Residues 520-529 (NDISSTTSSD) are compositionally biased toward low complexity. Phosphoserine is present on residues Ser528 and Ser537. Residues 530-546 (GRAKPESSYHDQEEQFA) show a composition bias toward basic and acidic residues.

This sequence belongs to the major facilitator superfamily. Sugar transporter (TC 2.A.1.1) family.

The protein localises to the membrane. High-affinity glucose transporter. The sequence is that of High-affinity glucose transporter ght5 (ght5) from Schizosaccharomyces pombe (strain 972 / ATCC 24843) (Fission yeast).